A 255-amino-acid polypeptide reads, in one-letter code: 5-oxoprolinase subunit A (255 aa).

It belongs to the LamB/PxpA family. As to quaternary structure, forms a complex composed of PxpA, PxpB and PxpC.

It catalyses the reaction 5-oxo-L-proline + ATP + 2 H2O = L-glutamate + ADP + phosphate + H(+). Catalyzes the cleavage of 5-oxoproline to form L-glutamate coupled to the hydrolysis of ATP to ADP and inorganic phosphate. This chain is 5-oxoprolinase subunit A, found in Thermococcus sibiricus (strain DSM 12597 / MM 739).